A 227-amino-acid polypeptide reads, in one-letter code: Deoxyribose-phosphate aldolase (227 aa).

The active-site Proton donor/acceptor is the Asp-96. Catalysis depends on Lys-158, which acts as the Schiff-base intermediate with acetaldehyde. The Proton donor/acceptor role is filled by Lys-187.

The protein belongs to the DeoC/FbaB aldolase family. DeoC type 1 subfamily.

It is found in the cytoplasm. It catalyses the reaction 2-deoxy-D-ribose 5-phosphate = D-glyceraldehyde 3-phosphate + acetaldehyde. It functions in the pathway carbohydrate degradation; 2-deoxy-D-ribose 1-phosphate degradation; D-glyceraldehyde 3-phosphate and acetaldehyde from 2-deoxy-alpha-D-ribose 1-phosphate: step 2/2. In terms of biological role, catalyzes a reversible aldol reaction between acetaldehyde and D-glyceraldehyde 3-phosphate to generate 2-deoxy-D-ribose 5-phosphate. This Desulfotalea psychrophila (strain LSv54 / DSM 12343) protein is Deoxyribose-phosphate aldolase.